Reading from the N-terminus, the 230-residue chain is 2-C-methyl-D-erythritol 4-phosphate cytidylyltransferase (230 aa).

Belongs to the IspD/TarI cytidylyltransferase family. IspD subfamily.

The catalysed reaction is 2-C-methyl-D-erythritol 4-phosphate + CTP + H(+) = 4-CDP-2-C-methyl-D-erythritol + diphosphate. It participates in isoprenoid biosynthesis; isopentenyl diphosphate biosynthesis via DXP pathway; isopentenyl diphosphate from 1-deoxy-D-xylulose 5-phosphate: step 2/6. Catalyzes the formation of 4-diphosphocytidyl-2-C-methyl-D-erythritol from CTP and 2-C-methyl-D-erythritol 4-phosphate (MEP). The sequence is that of 2-C-methyl-D-erythritol 4-phosphate cytidylyltransferase from Laribacter hongkongensis (strain HLHK9).